A 249-amino-acid chain; its full sequence is Low affinity immunoglobulin gamma Fc region receptor III-A (249 aa).

A signal peptide spans 1–20; that stretch reads MWYLLLPTALLLTVSSGVGA. Residues 21–203 lie on the Extracellular side of the membrane; that stretch reads GLQKAVVNLD…SPSSFLPWHQ (183 aa). 2 Ig-like C2-type domains span residues 31–103 and 117–188; these read PEWV…QLDV and FQEG…LQIS. 2 cysteine pairs are disulfide-bonded: C46/C88 and C127/C171. Residues N55 and N62 are each glycosylated (N-linked (GlcNAc...) asparagine). A glycan (N-linked (GlcNAc...) asparagine) is linked at N179. Residues 204–224 form a helical membrane-spanning segment; it reads ITFCLLIGLLFAIDTVLYFSV. The Cytoplasmic portion of the chain corresponds to 225–249; sequence QRSLQSSVAVYEEPKLHWSKEPQDK. Phosphotyrosine is present on Y235.

In terms of assembly, forms a heterooligomeric complex with ITAM-containing signaling subunits FCER1G. Interacts (via transmembrane domain) with signaling subunits; this interaction is a prerequisite for receptor complex expression on the cell surface and intracellular signal transduction. Binds the Fc region of antigen-complexed IgG. Post-translationally, N-glycosylated. Phosphorylated following receptor ligation.

It localises to the cell membrane. Receptor for the invariable Fc fragment of immunoglobulin gamma (IgG). Binds with intermediate affinity to both IgG2a and IgG2b. Can bind to IgG2a and IgG2b monomers. Does not display binding to IgG1 or IgG3. Recognizes neutralizing virus-specific IgGs displayed on the cell surface of infected cells and triggers antibody-dependent cellular cytotoxicity (ADCC). Confers protection to lethal influenza virus infection. On splenic dendritic cells, uptakes antigen immune complexes and efficiently divert them into MHC class I and II antigen presentation pathways to provide for superior priming of CD4-positive and CD8-positive T cell immune responses. Mediates neutrophil activation by IgG complexes redundantly with FCGR2A. Plays a role in promoting bone resorption by enhancing osteoclast differentiation following binding to IgG2a. Also acts as a receptor for the Fc region of immunoglobulin epsilon (IgE). Binds with low affinity to both the a and b allotypes of IgE. Has also been shown to bind to IgE allotype a only but not to allotype b. Binds aggregated IgE but not the monomeric form and bound monomeric IgG is readily displaced by IgE complexes. Binding to IgE promotes macrophage-mediated phagocytosis, antigen presentation to T cells, production of pro-inflammatory cytokines and the late phase of cutaneous allergic reactions. Mediates enhanced ADCC in response to afucosylated IgGs. The protein is Low affinity immunoglobulin gamma Fc region receptor III-A of Rattus norvegicus (Rat).